A 307-amino-acid polypeptide reads, in one-letter code: UDP-3-O-acyl-N-acetylglucosamine deacetylase (307 aa).

Zn(2+) is bound by residues H80, H239, and D243. H266 acts as the Proton donor in catalysis.

It belongs to the LpxC family. Zn(2+) is required as a cofactor.

The catalysed reaction is a UDP-3-O-[(3R)-3-hydroxyacyl]-N-acetyl-alpha-D-glucosamine + H2O = a UDP-3-O-[(3R)-3-hydroxyacyl]-alpha-D-glucosamine + acetate. It functions in the pathway glycolipid biosynthesis; lipid IV(A) biosynthesis; lipid IV(A) from (3R)-3-hydroxytetradecanoyl-[acyl-carrier-protein] and UDP-N-acetyl-alpha-D-glucosamine: step 2/6. Functionally, catalyzes the hydrolysis of UDP-3-O-myristoyl-N-acetylglucosamine to form UDP-3-O-myristoylglucosamine and acetate, the committed step in lipid A biosynthesis. This Neisseria meningitidis serogroup C (strain 053442) protein is UDP-3-O-acyl-N-acetylglucosamine deacetylase.